The chain runs to 110 residues: Ribonuclease P protein component 1 (110 aa).

Belongs to the eukaryotic/archaeal RNase P protein component 1 family. In terms of assembly, consists of a catalytic RNA component and at least 4-5 protein subunits.

The protein localises to the cytoplasm. It catalyses the reaction Endonucleolytic cleavage of RNA, removing 5'-extranucleotides from tRNA precursor.. Functionally, part of ribonuclease P, a protein complex that generates mature tRNA molecules by cleaving their 5'-ends. The chain is Ribonuclease P protein component 1 from Methanosarcina barkeri (strain Fusaro / DSM 804).